A 264-amino-acid chain; its full sequence is Apolipoprotein A-I (264 aa).

The first 18 residues, 1–18, serve as a signal peptide directing secretion; the sequence is MKAVLLVVAALFLAGSQA. 2 repeat units span residues 67–88 and 89–110. Positions 67–264 are 10 X approximate tandem repeats; that stretch reads LRLSDNWDTL…DQASKQLAAQ (198 aa). The stretch at 111–121 is one 3; half-length repeat; it reads EDLQDVKHKVQ. 5 repeat units span residues 122-143, 144-165, 166-187, 188-207, and 208-229. A Methionine sulfoxide modification is found at Met-193. The 9; half-length repeat unit spans residues 230–240; it reads PALEDLRQGLL. Repeat 10 spans residues 241 to 264; that stretch reads PVLENLKASILSSIDQASKQLAAQ.

Belongs to the apolipoprotein A1/A4/E family. As to quaternary structure, homodimer. Interacts with APOA1BP and CLU. Component of a sperm activating protein complex (SPAP), consisting of APOA1, an immunoglobulin heavy chain, an immunoglobulin light chain and albumin. Interacts with NDRG1. Interacts with SCGB3A2. Interacts with NAXE and YJEFN3. Glycosylated. Post-translationally, palmitoylated. In terms of processing, phosphorylation sites are present in the extracellular medium.

It is found in the secreted. In terms of biological role, participates in the reverse transport of cholesterol from tissues to the liver for excretion by promoting cholesterol efflux from tissues and by acting as a cofactor for the lecithin cholesterol acyltransferase (LCAT). As part of the SPAP complex, activates spermatozoa motility. The chain is Apolipoprotein A-I (APOA1) from Cavia porcellus (Guinea pig).